The chain runs to 346 residues: Protein tas (346 aa).

Tyrosine 53 (proton donor) is an active-site residue. 234 to 244 contacts NADP(+); the sequence is SCLGFGTLTGK.

It belongs to the aldo/keto reductase family. Aldo/keto reductase 2 subfamily.

This is Protein tas (tas) from Escherichia coli (strain K12).